The sequence spans 176 residues: Disulfide bond formation protein B (176 aa).

Residues 1–14 (MLRFLNQCSQGRGA) lie on the Cytoplasmic side of the membrane. The helical transmembrane segment at 15–31 (WLLMAFTALALELTALW) threads the bilayer. The Periplasmic segment spans residues 32-49 (FQHVMLLKPCVLCIYERC). The cysteines at positions 41 and 44 are disulfide-linked. A helical membrane pass occupies residues 50 to 65 (ALFGVLGAALIGAIAP). Topologically, residues 66-71 (KTPLRY) are cytoplasmic. The chain crosses the membrane as a helical span at residues 72–89 (VAMVIWLYSAFRGVQLTY). At 90 to 144 (EHTMLQLYPSPFATCDFMVRFPEWLPLDKWVPQVFVASGDCAERQWDFLGLEMPQ) the chain is on the periplasmic side. A disulfide bond links Cys-104 and Cys-130. Residues 145 to 163 (WLLGIFIAYLIVAVLVMIS) traverse the membrane as a helical segment. Topologically, residues 164–176 (QPFKAKKRDLFGR) are cytoplasmic.

This sequence belongs to the DsbB family.

The protein resides in the cell inner membrane. Its function is as follows. Required for disulfide bond formation in some periplasmic proteins. Acts by oxidizing the DsbA protein. This is Disulfide bond formation protein B from Shigella sonnei (strain Ss046).